We begin with the raw amino-acid sequence, 522 residues long: GMP synthase [glutamine-hydrolyzing] (522 aa).

Positions 8–204 constitute a Glutamine amidotransferase type-1 domain; it reads RLLIIDFGSQ…FVRLAGFKGD (197 aa). Catalysis depends on Cys-86, which acts as the Nucleophile. Catalysis depends on residues His-179 and Glu-181. Residues 205-397 form the GMPS ATP-PPase domain; sequence WTMGAYREEA…LGLPASFIGR (193 aa). Residue 232–238 coordinates ATP; that stretch reads SGGVDSS.

As to quaternary structure, homodimer.

It carries out the reaction XMP + L-glutamine + ATP + H2O = GMP + L-glutamate + AMP + diphosphate + 2 H(+). The protein operates within purine metabolism; GMP biosynthesis; GMP from XMP (L-Gln route): step 1/1. Its function is as follows. Catalyzes the synthesis of GMP from XMP. The sequence is that of GMP synthase [glutamine-hydrolyzing] from Roseobacter denitrificans (strain ATCC 33942 / OCh 114) (Erythrobacter sp. (strain OCh 114)).